A 468-amino-acid chain; its full sequence is 3-isopropylmalate dehydratase large subunit (468 aa).

[4Fe-4S] cluster-binding residues include Cys349, Cys409, and Cys412.

The protein belongs to the aconitase/IPM isomerase family. LeuC type 1 subfamily. In terms of assembly, heterodimer of LeuC and LeuD. [4Fe-4S] cluster serves as cofactor.

It carries out the reaction (2R,3S)-3-isopropylmalate = (2S)-2-isopropylmalate. Its pathway is amino-acid biosynthesis; L-leucine biosynthesis; L-leucine from 3-methyl-2-oxobutanoate: step 2/4. In terms of biological role, catalyzes the isomerization between 2-isopropylmalate and 3-isopropylmalate, via the formation of 2-isopropylmaleate. The protein is 3-isopropylmalate dehydratase large subunit of Shewanella baltica (strain OS185).